A 364-amino-acid polypeptide reads, in one-letter code: D-alanine--D-alanine ligase (364 aa).

Positions 141-346 (KNLFAQAGLR…YSELIERLIA (206 aa)) constitute an ATP-grasp domain. 174 to 229 (EQELGYPCFVKPANAGSSVGISKCKQRDDLKTAFAEAFKYDRKIIIEESIVGREIE) provides a ligand contact to ATP. Mg(2+) contacts are provided by Asp-300, Glu-313, and Asn-315.

Belongs to the D-alanine--D-alanine ligase family. Mg(2+) is required as a cofactor. The cofactor is Mn(2+).

The protein resides in the cytoplasm. The catalysed reaction is 2 D-alanine + ATP = D-alanyl-D-alanine + ADP + phosphate + H(+). It functions in the pathway cell wall biogenesis; peptidoglycan biosynthesis. In terms of biological role, cell wall formation. In Geobacillus thermodenitrificans (strain NG80-2), this protein is D-alanine--D-alanine ligase.